Consider the following 239-residue polypeptide: Ribosomal RNA large subunit methyltransferase E (239 aa).

S-adenosyl-L-methionine is bound by residues Gly-88, Trp-90, Asp-111, Asp-127, and Asp-151. Residue Lys-191 is the Proton acceptor of the active site.

It belongs to the class I-like SAM-binding methyltransferase superfamily. RNA methyltransferase RlmE family.

The protein localises to the cytoplasm. The enzyme catalyses uridine(2552) in 23S rRNA + S-adenosyl-L-methionine = 2'-O-methyluridine(2552) in 23S rRNA + S-adenosyl-L-homocysteine + H(+). Functionally, specifically methylates the uridine in position 2552 of 23S rRNA at the 2'-O position of the ribose in the fully assembled 50S ribosomal subunit. This is Ribosomal RNA large subunit methyltransferase E from Bartonella bacilliformis (strain ATCC 35685 / KC583 / Herrer 020/F12,63).